Here is a 78-residue protein sequence, read N- to C-terminus: Large ribosomal subunit protein bL28 (78 aa).

The disordered stretch occupies residues 1 to 23; the sequence is MSRKCQITGKKANNAMAVSHSHR.

Belongs to the bacterial ribosomal protein bL28 family.

In Picosynechococcus sp. (strain ATCC 27264 / PCC 7002 / PR-6) (Agmenellum quadruplicatum), this protein is Large ribosomal subunit protein bL28.